The sequence spans 741 residues: Methionine--tRNA ligase (741 aa).

Residues 1 to 22 (MTMKQYTMSKMNAETQTQTRES) show a composition bias toward polar residues. The tract at residues 1–25 (MTMKQYTMSKMNAETQTQTRESFPT) is disordered. The 'HIGH' region signature appears at 36–46 (PYANGDLHIGH). Cys167, Cys170, Cys179, and Cys183 together coordinate Zn(2+). The interval 309-329 (VRSHSSSSAKDSSEGNSPSNI) is disordered. Residues 311–329 (SHSSSSAKDSSEGNSPSNI) are compositionally biased toward low complexity. Thr381 contacts ATP. A disordered region spans residues 591 to 629 (KLADRVTDPTDDDDSDTDTETGTDVAETTNESHSESNMT). Residues 599–611 (PTDDDDSDTDTET) are compositionally biased toward acidic residues. Polar residues predominate over residues 616–629 (AETTNESHSESNMT). Positions 643–741 (EFEELDLRVA…EDADPGTSIQ (99 aa)) constitute a tRNA-binding domain.

Belongs to the class-I aminoacyl-tRNA synthetase family. MetG type 1 subfamily. In terms of assembly, homodimer. The cofactor is Zn(2+).

The protein resides in the cytoplasm. It carries out the reaction tRNA(Met) + L-methionine + ATP = L-methionyl-tRNA(Met) + AMP + diphosphate. Is required not only for elongation of protein synthesis but also for the initiation of all mRNA translation through initiator tRNA(fMet) aminoacylation. This chain is Methionine--tRNA ligase, found in Haloquadratum walsbyi (strain DSM 16790 / HBSQ001).